We begin with the raw amino-acid sequence, 187 residues long: Elongation factor P (187 aa).

Lys-34 carries the N6-(3,6-diaminohexanoyl)-5-hydroxylysine modification.

This sequence belongs to the elongation factor P family. Post-translationally, may be beta-lysylated on the epsilon-amino group of Lys-34 by the combined action of EpmA and EpmB, and then hydroxylated on the C5 position of the same residue by EpmC (if this protein is present). Lysylation is critical for the stimulatory effect of EF-P on peptide-bond formation. The lysylation moiety may extend toward the peptidyltransferase center and stabilize the terminal 3-CCA end of the tRNA. Hydroxylation of the C5 position on Lys-34 may allow additional potential stabilizing hydrogen-bond interactions with the P-tRNA.

Its subcellular location is the cytoplasm. Its pathway is protein biosynthesis; polypeptide chain elongation. Involved in peptide bond synthesis. Alleviates ribosome stalling that occurs when 3 or more consecutive Pro residues or the sequence PPG is present in a protein, possibly by augmenting the peptidyl transferase activity of the ribosome. Modification of Lys-34 is required for alleviation. This Thioalkalivibrio sulfidiphilus (strain HL-EbGR7) protein is Elongation factor P.